Reading from the N-terminus, the 338-residue chain is dTDP-glucose 4,6-dehydratase (338 aa).

NAD(+)-binding positions include 12 to 13 (FI), 33 to 36 (DKLT), 59 to 60 (DI), 81 to 85 (LAAES), and Thr-100. Ser-85 provides a ligand contact to substrate. Thr-134 is a binding site for substrate. The Proton donor role is filled by Asp-135. Catalysis depends on proton acceptor residues Glu-136 and Tyr-160. Residue 160–164 (YSASK) coordinates NAD(+). Substrate is bound at residue Asn-189. An NAD(+)-binding site is contributed by Asn-190. Substrate contacts are provided by residues 199–200 (KL), 215–217 (PIY), Arg-224, Asn-259, and 293–297 (DRPGH).

This sequence belongs to the NAD(P)-dependent epimerase/dehydratase family. dTDP-glucose dehydratase subfamily. In terms of assembly, homodimer. NAD(+) is required as a cofactor.

It catalyses the reaction dTDP-alpha-D-glucose = dTDP-4-dehydro-6-deoxy-alpha-D-glucose + H2O. It participates in carbohydrate biosynthesis; dTDP-L-rhamnose biosynthesis. Its pathway is bacterial outer membrane biogenesis; LPS O-antigen biosynthesis. In terms of biological role, catalyzes the dehydration of dTDP-D-glucose to form dTDP-6-deoxy-D-xylo-4-hexulose via a three-step process involving oxidation, dehydration and reduction. The chain is dTDP-glucose 4,6-dehydratase (rffG) from Haemophilus influenzae (strain ATCC 51907 / DSM 11121 / KW20 / Rd).